Here is a 218-residue protein sequence, read N- to C-terminus: Protein-methionine-sulfoxide reductase heme-binding subunit MsrQ (218 aa).

5 consecutive transmembrane segments (helical) span residues 8-28 (VIVA…LLGW), 60-80 (FLLI…AVLI), 86-106 (LGLY…TLDL), 121-141 (PYIT…ITST), and 155-175 (VHML…WLVK).

Belongs to the MsrQ family. As to quaternary structure, heterodimer of a catalytic subunit (MsrP) and a heme-binding subunit (MsrQ). FMN serves as cofactor. Heme b is required as a cofactor.

It localises to the cell inner membrane. In terms of biological role, part of the MsrPQ system that repairs oxidized periplasmic proteins containing methionine sulfoxide residues (Met-O), using respiratory chain electrons. Thus protects these proteins from oxidative-stress damage caused by reactive species of oxygen and chlorine generated by the host defense mechanisms. MsrPQ is essential for the maintenance of envelope integrity under bleach stress, rescuing a wide series of structurally unrelated periplasmic proteins from methionine oxidation. MsrQ provides electrons for reduction to the reductase catalytic subunit MsrP, using the quinone pool of the respiratory chain. The sequence is that of Protein-methionine-sulfoxide reductase heme-binding subunit MsrQ from Xanthomonas oryzae pv. oryzae (strain MAFF 311018).